The primary structure comprises 182 residues: Oligoribonuclease (182 aa).

The Exonuclease domain occupies 7 to 170 (LIWIDLEMTG…EDIRESVEEL (164 aa)). Tyrosine 128 is an active-site residue.

It belongs to the oligoribonuclease family.

Its subcellular location is the cytoplasm. Functionally, 3'-to-5' exoribonuclease specific for small oligoribonucleotides. The sequence is that of Oligoribonuclease from Hahella chejuensis (strain KCTC 2396).